A 409-amino-acid chain; its full sequence is Probable beta-1,3-galactosyltransferase 3 (409 aa).

Residues 20–42 (WTFLLCFGSFCFGILFTDRMWII) form a helical; Signal-anchor for type II membrane protein membrane-spanning segment.

Belongs to the glycosyltransferase 31 family. Mn(2+) serves as cofactor.

The protein resides in the golgi apparatus membrane. The protein operates within protein modification; protein glycosylation. Functionally, beta-1,3-galactosyltransferase that transfers galactose from UDP-galactose to substrates with a terminal glycosyl residue. This Arabidopsis thaliana (Mouse-ear cress) protein is Probable beta-1,3-galactosyltransferase 3 (B3GALT3).